Consider the following 244-residue polypeptide: Protein crossbronx (244 aa).

The region spanning 20-176 (QQEYKILAEY…VQENIKESKE (157 aa)) is the UBC core domain. Residues 209-244 (AGRSKQTEPSAQQGNGGHATGLSWVKEGEFKPLSIE) form a disordered region.

This sequence belongs to the ubiquitin-conjugating enzyme family. FTS subfamily.

The chain is Protein crossbronx (cbx) from Drosophila simulans (Fruit fly).